A 700-amino-acid chain; its full sequence is Chaperonin CPN60, mitochondrial (700 aa).

Residues 1–9 (MRMKRIHIL) constitute a mitochondrion transit peptide. The interval 636–700 (TYKHKLHDDE…SMNDEYNYDE (65 aa)) is disordered. Residues 644-700 (DEDTDEDDEEDEDDEDDEDDLDDDDYDDEDEEDEEDEEDEDDEDDEDSMNDEYNYDE) are compositionally biased toward acidic residues.

This sequence belongs to the chaperonin (HSP60) family.

Its subcellular location is the mitochondrion matrix. Functionally, implicated in mitochondrial protein import and macromolecular assembly. May facilitate the correct folding of imported proteins. May also prevent misfolding and promote the refolding and proper assembly of unfolded polypeptides generated under stress conditions in the mitochondrial matrix. This is Chaperonin CPN60, mitochondrial from Plasmodium falciparum (isolate FCR-3 / Gambia).